A 631-amino-acid polypeptide reads, in one-letter code: ATP-dependent zinc metalloprotease FtsH (631 aa).

Topologically, residues Met-1–Asn-5 are cytoplasmic. The helical transmembrane segment at Pro-6–Ala-26 threads the bilayer. The Periplasmic portion of the chain corresponds to Arg-27–Gly-102. The chain crosses the membrane as a helical span at residues Trp-103 to Trp-123. Residues Met-124 to Ser-631 are Cytoplasmic-facing. ATP is bound at residue Gly-196 to Thr-203. His-418 serves as a coordination point for Zn(2+). Residue Glu-419 is part of the active site. Zn(2+)-binding residues include His-422 and Asp-494.

In the central section; belongs to the AAA ATPase family. This sequence in the C-terminal section; belongs to the peptidase M41 family. In terms of assembly, homohexamer. Zn(2+) serves as cofactor.

The protein localises to the cell inner membrane. Functionally, acts as a processive, ATP-dependent zinc metallopeptidase for both cytoplasmic and membrane proteins. Plays a role in the quality control of integral membrane proteins. This is ATP-dependent zinc metalloprotease FtsH from Endomicrobium trichonymphae.